A 516-amino-acid polypeptide reads, in one-letter code: uncharacterized protein (516 aa).

Helical transmembrane passes span 183–203 (SAAD…GDGV), 261–281 (VLKT…TYII), 308–328 (VMNG…TALL), 329–349 (LDHQ…AYSF), 356–376 (LLDV…GQVL), 379–399 (LAFS…LALA), 430–450 (LGHG…FLAL), 461–481 (PAWL…IWLL), and 492–512 (IVFA…ASAF).

It localises to the cell membrane. In terms of biological role, possible permease/transporter. This is an uncharacterized protein from Sinorhizobium fredii (strain NBRC 101917 / NGR234).